We begin with the raw amino-acid sequence, 206 residues long: Ribosomal RNA large subunit methyltransferase E (206 aa).

5 residues coordinate S-adenosyl-L-methionine: glycine 61, tryptophan 63, aspartate 81, aspartate 97, and aspartate 122. The active-site Proton acceptor is the lysine 162.

It belongs to the class I-like SAM-binding methyltransferase superfamily. RNA methyltransferase RlmE family.

It localises to the cytoplasm. It catalyses the reaction uridine(2552) in 23S rRNA + S-adenosyl-L-methionine = 2'-O-methyluridine(2552) in 23S rRNA + S-adenosyl-L-homocysteine + H(+). Its function is as follows. Specifically methylates the uridine in position 2552 of 23S rRNA at the 2'-O position of the ribose in the fully assembled 50S ribosomal subunit. The sequence is that of Ribosomal RNA large subunit methyltransferase E from Neisseria gonorrhoeae (strain ATCC 700825 / FA 1090).